Reading from the N-terminus, the 324-residue chain is Aspartate carbamoyltransferase catalytic subunit (324 aa).

Carbamoyl phosphate contacts are provided by R55 and T56. K83 serves as a coordination point for L-aspartate. Carbamoyl phosphate contacts are provided by R105, H135, and Q138. R173 and R227 together coordinate L-aspartate. Carbamoyl phosphate-binding residues include G268 and P269.

It belongs to the aspartate/ornithine carbamoyltransferase superfamily. ATCase family. As to quaternary structure, heterododecamer (2C3:3R2) of six catalytic PyrB chains organized as two trimers (C3), and six regulatory PyrI chains organized as three dimers (R2).

It carries out the reaction carbamoyl phosphate + L-aspartate = N-carbamoyl-L-aspartate + phosphate + H(+). It participates in pyrimidine metabolism; UMP biosynthesis via de novo pathway; (S)-dihydroorotate from bicarbonate: step 2/3. Catalyzes the condensation of carbamoyl phosphate and aspartate to form carbamoyl aspartate and inorganic phosphate, the committed step in the de novo pyrimidine nucleotide biosynthesis pathway. The sequence is that of Aspartate carbamoyltransferase catalytic subunit from Nocardioides sp. (strain ATCC BAA-499 / JS614).